A 240-amino-acid chain; its full sequence is ATP-dependent dethiobiotin synthetase BioD (240 aa).

13-18 contributes to the ATP binding site; that stretch reads EVGKTV. T17 provides a ligand contact to Mg(2+). K38 is an active-site residue. S42 lines the substrate pocket. Residues D55, 116–119, 176–177, and 205–207 contribute to the ATP site; these read EGAG, ND, and PWL. 2 residues coordinate Mg(2+): D55 and E116.

The protein belongs to the dethiobiotin synthetase family. As to quaternary structure, homodimer. The cofactor is Mg(2+).

It localises to the cytoplasm. It catalyses the reaction (7R,8S)-7,8-diammoniononanoate + CO2 + ATP = (4R,5S)-dethiobiotin + ADP + phosphate + 3 H(+). It functions in the pathway cofactor biosynthesis; biotin biosynthesis; biotin from 7,8-diaminononanoate: step 1/2. In terms of biological role, catalyzes a mechanistically unusual reaction, the ATP-dependent insertion of CO2 between the N7 and N8 nitrogen atoms of 7,8-diaminopelargonic acid (DAPA, also called 7,8-diammoniononanoate) to form a ureido ring. This chain is ATP-dependent dethiobiotin synthetase BioD, found in Pseudescherichia vulneris (Escherichia vulneris).